We begin with the raw amino-acid sequence, 273 residues long: Undecaprenyl-diphosphatase (273 aa).

7 helical membrane-spanning segments follow: residues 4–24 (LILL…FLPI), 43–63 (KAKV…CWEY), 82–102 (FVIN…LFIK), 108–128 (LFHP…ILWA), 183–203 (AAEF…FYDV), 217–237 (MFAT…RGFI), and 248–268 (FAWY…SGLV).

The protein belongs to the UppP family.

It localises to the cell inner membrane. It carries out the reaction di-trans,octa-cis-undecaprenyl diphosphate + H2O = di-trans,octa-cis-undecaprenyl phosphate + phosphate + H(+). Catalyzes the dephosphorylation of undecaprenyl diphosphate (UPP). Confers resistance to bacitracin. The chain is Undecaprenyl-diphosphatase from Nitrosomonas europaea (strain ATCC 19718 / CIP 103999 / KCTC 2705 / NBRC 14298).